The following is a 95-amino-acid chain: Putative per-hexamer repeat protein 4 (95 aa).

This Mus musculus (Mouse) protein is Putative per-hexamer repeat protein 4 (Phxr4).